A 185-amino-acid chain; its full sequence is Ribosome-recycling factor (185 aa).

This sequence belongs to the RRF family.

The protein resides in the cytoplasm. Responsible for the release of ribosomes from messenger RNA at the termination of protein biosynthesis. May increase the efficiency of translation by recycling ribosomes from one round of translation to another. The polypeptide is Ribosome-recycling factor (Symbiobacterium thermophilum (strain DSM 24528 / JCM 14929 / IAM 14863 / T)).